The primary structure comprises 531 residues: Peptide chain release factor 3 (531 aa).

A tr-type G domain is found at 13 to 282 (SKRRTFAIIS…GLTQWAPSPM (270 aa)). Residues 22–29 (SHPDAGKT), 90–94 (DTPGH), and 144–147 (NKLD) contribute to the GTP site.

The protein belongs to the TRAFAC class translation factor GTPase superfamily. Classic translation factor GTPase family. PrfC subfamily.

Its subcellular location is the cytoplasm. Functionally, increases the formation of ribosomal termination complexes and stimulates activities of RF-1 and RF-2. It binds guanine nucleotides and has strong preference for UGA stop codons. It may interact directly with the ribosome. The stimulation of RF-1 and RF-2 is significantly reduced by GTP and GDP, but not by GMP. This is Peptide chain release factor 3 from Vibrio cholerae serotype O1 (strain ATCC 39541 / Classical Ogawa 395 / O395).